A 422-amino-acid chain; its full sequence is UDP-N-acetylglucosamine 1-carboxyvinyltransferase (422 aa).

22–23 provides a ligand contact to phosphoenolpyruvate; sequence KN. R93 is a binding site for UDP-N-acetyl-alpha-D-glucosamine. C117 functions as the Proton donor in the catalytic mechanism. C117 is subject to 2-(S-cysteinyl)pyruvic acid O-phosphothioketal. UDP-N-acetyl-alpha-D-glucosamine is bound by residues 122–126, D308, and L330; that span reads RPVDL.

It belongs to the EPSP synthase family. MurA subfamily.

It localises to the cytoplasm. It catalyses the reaction phosphoenolpyruvate + UDP-N-acetyl-alpha-D-glucosamine = UDP-N-acetyl-3-O-(1-carboxyvinyl)-alpha-D-glucosamine + phosphate. It functions in the pathway cell wall biogenesis; peptidoglycan biosynthesis. In terms of biological role, cell wall formation. Adds enolpyruvyl to UDP-N-acetylglucosamine. The sequence is that of UDP-N-acetylglucosamine 1-carboxyvinyltransferase from Helicobacter pylori (strain ATCC 700392 / 26695) (Campylobacter pylori).